The primary structure comprises 453 residues: Ethanolamine ammonia-lyase large subunit (453 aa).

Substrate-binding positions include 160-162 (RLQ) and Asn-193. Residues Pro-194 and Gln-246 each contribute to the adenosylcob(III)alamin site. Glu-287 provides a ligand contact to substrate. Ser-295 serves as a coordination point for adenosylcob(III)alamin. Position 362 (Asp-362) interacts with substrate. Met-401 provides a ligand contact to adenosylcob(III)alamin.

This sequence belongs to the EutB family. The basic unit is a heterodimer which dimerizes to form tetramers. The heterotetramers trimerize; 6 large subunits form a core ring with 6 small subunits projecting outwards. The cofactor is adenosylcob(III)alamin.

The protein resides in the bacterial microcompartment. It carries out the reaction ethanolamine = acetaldehyde + NH4(+). Its pathway is amine and polyamine degradation; ethanolamine degradation. Its function is as follows. Catalyzes the deamination of various vicinal amino-alcohols to oxo compounds. Allows this organism to utilize ethanolamine as the sole source of nitrogen and carbon in the presence of vitamin B12. The sequence is that of Ethanolamine ammonia-lyase large subunit from Escherichia coli O157:H7.